A 57-amino-acid polypeptide reads, in one-letter code: DNA gyrase inhibitor YacG (57 aa).

Zn(2+) is bound by residues Cys10, Cys13, Cys25, and Cys29.

This sequence belongs to the DNA gyrase inhibitor YacG family. As to quaternary structure, interacts with GyrB. The cofactor is Zn(2+).

Functionally, inhibits all the catalytic activities of DNA gyrase by preventing its interaction with DNA. Acts by binding directly to the C-terminal domain of GyrB, which probably disrupts DNA binding by the gyrase. The sequence is that of DNA gyrase inhibitor YacG from Brucella melitensis biotype 1 (strain ATCC 23456 / CCUG 17765 / NCTC 10094 / 16M).